The sequence spans 324 residues: Fructose-1,6-bisphosphatase class 1 (324 aa).

Residues E88, D107, L109, and D110 each contribute to the Mg(2+) site. Residues 110-113 (DGSS), N199, and K265 each bind substrate. Position 271 (E271) interacts with Mg(2+).

Belongs to the FBPase class 1 family. As to quaternary structure, homotetramer. The cofactor is Mg(2+).

It localises to the cytoplasm. It carries out the reaction beta-D-fructose 1,6-bisphosphate + H2O = beta-D-fructose 6-phosphate + phosphate. Its pathway is carbohydrate biosynthesis; gluconeogenesis. The protein is Fructose-1,6-bisphosphatase class 1 of Neisseria meningitidis serogroup A / serotype 4A (strain DSM 15465 / Z2491).